The primary structure comprises 507 residues: ESX-5 secretion system ATPase EccB5 (507 aa).

The helical transmembrane segment at 56 to 76 threads the bilayer; that stretch reads VVASVSAALVICLGSLLWSFI.

It belongs to the EccB family. As to quaternary structure, part of the ESX-5 / type VII secretion system (T7SS), which is composed of cytosolic and membrane components. The ESX-5 membrane complex is composed of EccB5, EccC5, EccD5 and EccE5.

It localises to the cell inner membrane. Functionally, an ATPase. Part of the ESX-5 specialized secretion system, which is responsible for the secretion of EsxN and a number of PE_PGRS and PPE proteins. The protein is ESX-5 secretion system ATPase EccB5 of Mycobacterium marinum (strain ATCC BAA-535 / M).